Here is a 1155-residue protein sequence, read N- to C-terminus: DNA-directed RNA polymerase subunit beta (1155 aa).

The protein belongs to the RNA polymerase beta chain family. As to quaternary structure, the RNAP catalytic core consists of 2 alpha, 1 beta, 1 beta' and 1 omega subunit. When a sigma factor is associated with the core the holoenzyme is formed, which can initiate transcription.

It catalyses the reaction RNA(n) + a ribonucleoside 5'-triphosphate = RNA(n+1) + diphosphate. DNA-dependent RNA polymerase catalyzes the transcription of DNA into RNA using the four ribonucleoside triphosphates as substrates. In Borrelia garinii subsp. bavariensis (strain ATCC BAA-2496 / DSM 23469 / PBi) (Borreliella bavariensis), this protein is DNA-directed RNA polymerase subunit beta.